The primary structure comprises 62 residues: Amolopin-P1 (62 aa).

An N-terminal signal peptide occupies residues 1 to 22 (MFPMKKSLLLLFFFGPISLSFC). Positions 23 to 44 (DQERGADEEENGGEVTEQEVKR) are excised as a propeptide.

As to expression, expressed by the skin glands.

Its subcellular location is the secreted. Its function is as follows. Antimicrobial peptide with activity against Gram-positive bacteria. Has been tested against S.aureus (MIC=37.5 ug/mL), against B.pumilus (MIC=75.0 ug/mL), B.cereus (no activity detected). Does not show activity against Gram-negative bacteria (E.coli, B.dysenteriae, A.calcoaceticus, P.aeruginosa) and fungi (C.albicans). Does not show hemolytic activity against rabbit erythrocytes. This is Amolopin-P1 from Amolops loloensis (Lolokou Sucker Frog).